The following is a 362-amino-acid chain: MSHNSFGHLFRVTTWGESHGPAIGCVVDGCPPGIPLTEADIQPALDRRRPGQSRFTTQRREADQVRILSGTFEGVTTGTPIALEIQNTDQRSKDYGDIAQRYRPGHADLTYDLKYGIRDYRGGGRSSARETACRVAAGEVARKILGAGITIRAALVRIGPHGIDRSRWDWSQIEANPFFCPDPVAAEQWAVYLDEIRKRGSSVGAVVEVIAEGVPAGLGAPLYGKLDSDLAAALMSINAVKGVEIGDGFDAATLTGEDNADEILAAPNEAGGPHIFGSNHAGGILGGISSGQPVVARFAVKPTSSILIPRRSVGRDGQPVEVITKGRHDPCVGIRAVPVGEAMVACVLADHLLRDRAQNGPR.

2 residues coordinate NADP(+): R48 and R54. FMN contacts are provided by residues 125 to 127, 238 to 239, G286, 301 to 305, and R327; these read RSS, NA, and KPTSS.

The protein belongs to the chorismate synthase family. Homotetramer. FMNH2 is required as a cofactor.

It catalyses the reaction 5-O-(1-carboxyvinyl)-3-phosphoshikimate = chorismate + phosphate. It participates in metabolic intermediate biosynthesis; chorismate biosynthesis; chorismate from D-erythrose 4-phosphate and phosphoenolpyruvate: step 7/7. In terms of biological role, catalyzes the anti-1,4-elimination of the C-3 phosphate and the C-6 proR hydrogen from 5-enolpyruvylshikimate-3-phosphate (EPSP) to yield chorismate, which is the branch point compound that serves as the starting substrate for the three terminal pathways of aromatic amino acid biosynthesis. This reaction introduces a second double bond into the aromatic ring system. The polypeptide is Chorismate synthase (Granulibacter bethesdensis (strain ATCC BAA-1260 / CGDNIH1)).